A 138-amino-acid polypeptide reads, in one-letter code: Cell division protein SepF (138 aa).

The interval Met-1 to Pro-59 is disordered. Polar residues predominate over residues Met-33–Val-48.

The protein belongs to the SepF family. As to quaternary structure, homodimer. Interacts with FtsZ.

Its subcellular location is the cytoplasm. Cell division protein that is part of the divisome complex and is recruited early to the Z-ring. Probably stimulates Z-ring formation, perhaps through the cross-linking of FtsZ protofilaments. Its function overlaps with FtsA. The protein is Cell division protein SepF of Lactobacillus delbrueckii subsp. bulgaricus (strain ATCC 11842 / DSM 20081 / BCRC 10696 / JCM 1002 / NBRC 13953 / NCIMB 11778 / NCTC 12712 / WDCM 00102 / Lb 14).